The chain runs to 147 residues: 3-dehydroquinate dehydratase (147 aa).

Residue Tyr-23 is the Proton acceptor of the active site. Substrate contacts are provided by Asn-74, His-80, and Asp-87. The Proton donor role is filled by His-100. Substrate contacts are provided by residues 101 to 102 (LS) and Arg-111.

It belongs to the type-II 3-dehydroquinase family. Homododecamer.

The enzyme catalyses 3-dehydroquinate = 3-dehydroshikimate + H2O. It functions in the pathway metabolic intermediate biosynthesis; chorismate biosynthesis; chorismate from D-erythrose 4-phosphate and phosphoenolpyruvate: step 3/7. Catalyzes a trans-dehydration via an enolate intermediate. This chain is 3-dehydroquinate dehydratase, found in Clostridium botulinum (strain Okra / Type B1).